The primary structure comprises 340 residues: Ketol-acid reductoisomerase (NADP(+)) (340 aa).

The KARI N-terminal Rossmann domain maps to 1-182; it reads MRVYYDRDCD…GGGRSGIIET (182 aa). NADP(+) contacts are provided by residues 24-27, Arg-48, Ser-51, Ser-53, and 83-86; these read YGSQ and DELQ. His-108 is a catalytic residue. Gly-134 contacts NADP(+). In terms of domain architecture, KARI C-terminal knotted spans 183 to 329; the sequence is NFRQECETDL…EKLRGMMPWI (147 aa). Positions 191, 195, 227, and 231 each coordinate Mg(2+). A substrate-binding site is contributed by Ser-252.

This sequence belongs to the ketol-acid reductoisomerase family. Mg(2+) serves as cofactor.

It carries out the reaction (2R)-2,3-dihydroxy-3-methylbutanoate + NADP(+) = (2S)-2-acetolactate + NADPH + H(+). The catalysed reaction is (2R,3R)-2,3-dihydroxy-3-methylpentanoate + NADP(+) = (S)-2-ethyl-2-hydroxy-3-oxobutanoate + NADPH + H(+). It functions in the pathway amino-acid biosynthesis; L-isoleucine biosynthesis; L-isoleucine from 2-oxobutanoate: step 2/4. The protein operates within amino-acid biosynthesis; L-valine biosynthesis; L-valine from pyruvate: step 2/4. Functionally, involved in the biosynthesis of branched-chain amino acids (BCAA). Catalyzes an alkyl-migration followed by a ketol-acid reduction of (S)-2-acetolactate (S2AL) to yield (R)-2,3-dihydroxy-isovalerate. In the isomerase reaction, S2AL is rearranged via a Mg-dependent methyl migration to produce 3-hydroxy-3-methyl-2-ketobutyrate (HMKB). In the reductase reaction, this 2-ketoacid undergoes a metal-dependent reduction by NADPH to yield (R)-2,3-dihydroxy-isovalerate. The protein is Ketol-acid reductoisomerase (NADP(+)) of Cereibacter sphaeroides (strain ATCC 17025 / ATH 2.4.3) (Rhodobacter sphaeroides).